Here is a 231-residue protein sequence, read N- to C-terminus: Deoxyribose-phosphate aldolase (231 aa).

Residue Asp86 is the Proton donor/acceptor of the active site. Lys147 (schiff-base intermediate with acetaldehyde) is an active-site residue. The active-site Proton donor/acceptor is Lys172. The tract at residues 206–231 is disordered; sequence WQAETAGETVTEPESDRDGADTTDGY.

This sequence belongs to the DeoC/FbaB aldolase family. DeoC type 1 subfamily.

It is found in the cytoplasm. The catalysed reaction is 2-deoxy-D-ribose 5-phosphate = D-glyceraldehyde 3-phosphate + acetaldehyde. Its pathway is carbohydrate degradation; 2-deoxy-D-ribose 1-phosphate degradation; D-glyceraldehyde 3-phosphate and acetaldehyde from 2-deoxy-alpha-D-ribose 1-phosphate: step 2/2. Its function is as follows. Catalyzes a reversible aldol reaction between acetaldehyde and D-glyceraldehyde 3-phosphate to generate 2-deoxy-D-ribose 5-phosphate. The polypeptide is Deoxyribose-phosphate aldolase (Haloarcula marismortui (strain ATCC 43049 / DSM 3752 / JCM 8966 / VKM B-1809) (Halobacterium marismortui)).